Here is a 467-residue protein sequence, read N- to C-terminus: Asparagine--tRNA ligase (467 aa).

It belongs to the class-II aminoacyl-tRNA synthetase family. As to quaternary structure, homodimer.

The protein resides in the cytoplasm. It catalyses the reaction tRNA(Asn) + L-asparagine + ATP = L-asparaginyl-tRNA(Asn) + AMP + diphosphate + H(+). In Histophilus somni (strain 129Pt) (Haemophilus somnus), this protein is Asparagine--tRNA ligase.